The following is a 216-amino-acid chain: MEIQKFIDHTILKPEATEEQVKKLCKEARDYKFASVCVNPYYTSLVSKELQGTDVKTCVVIGFPLGANTKEVKAFETKQAIENGAKEVDMVINIGALKDKKYDVVKEDIEAVVNEAKGKALVKVIIETCLLTDEEKVKACEISKEVGADFVKTSTGFSTGGAKKEDVKLMRETVGENIGVKASGGIRDYKTSLEMIEAGANRIGASAGIKIVEESK.

Catalysis depends on Asp89, which acts as the Proton donor/acceptor. Residue Lys152 is the Schiff-base intermediate with acetaldehyde of the active site. Lys181 (proton donor/acceptor) is an active-site residue.

It belongs to the DeoC/FbaB aldolase family. DeoC type 1 subfamily.

It localises to the cytoplasm. It catalyses the reaction 2-deoxy-D-ribose 5-phosphate = D-glyceraldehyde 3-phosphate + acetaldehyde. It functions in the pathway carbohydrate degradation; 2-deoxy-D-ribose 1-phosphate degradation; D-glyceraldehyde 3-phosphate and acetaldehyde from 2-deoxy-alpha-D-ribose 1-phosphate: step 2/2. Functionally, catalyzes a reversible aldol reaction between acetaldehyde and D-glyceraldehyde 3-phosphate to generate 2-deoxy-D-ribose 5-phosphate. In Clostridium tetani (strain Massachusetts / E88), this protein is Deoxyribose-phosphate aldolase.